Reading from the N-terminus, the 180-residue chain is Superoxide dismutase [Cu-Zn] (180 aa).

The first 19 residues, 1–19 (MFMNLLTQVSNAIFPQVEA), serve as a signal peptide directing secretion. Cu cation is bound by residues histidine 68, histidine 70, and histidine 85. A disulfide bridge links cysteine 79 with cysteine 171. Residues histidine 85, histidine 93, histidine 102, and aspartate 105 each contribute to the Zn(2+) site. Histidine 142 contacts Cu cation.

The protein belongs to the Cu-Zn superoxide dismutase family. Homodimer. Cu cation serves as cofactor. It depends on Zn(2+) as a cofactor.

It is found in the cytoplasm. The enzyme catalyses 2 superoxide + 2 H(+) = H2O2 + O2. The insertion of copper which activates the protein requires glutathione. This is independent of copper chaperone for SOD1 (CCS), which activates orthologs. Its function is as follows. Protects cells against oxidative stress by converting superoxide radicals to hydrogen peroxide. Required for normal brood size. May be involved in regulating mpk-1 phosphorylation downstream of phosphatase ptp-2 during oocyte maturation. This chain is Superoxide dismutase [Cu-Zn] (sod-1), found in Caenorhabditis elegans.